The following is a 647-amino-acid chain: Threonine--tRNA ligase (647 aa).

Residues 1-61 (MIKITFPDGA…TEDGAIEIVT (61 aa)) enclose the TGS domain. Residues 242-540 (DHRKLGKELD…LIENYKGAFP (299 aa)) form a catalytic region. Zn(2+) contacts are provided by C336, H387, and H517.

It belongs to the class-II aminoacyl-tRNA synthetase family. As to quaternary structure, homodimer. Requires Zn(2+) as cofactor.

It is found in the cytoplasm. The catalysed reaction is tRNA(Thr) + L-threonine + ATP = L-threonyl-tRNA(Thr) + AMP + diphosphate + H(+). Catalyzes the attachment of threonine to tRNA(Thr) in a two-step reaction: L-threonine is first activated by ATP to form Thr-AMP and then transferred to the acceptor end of tRNA(Thr). Also edits incorrectly charged L-seryl-tRNA(Thr). This is Threonine--tRNA ligase from Streptococcus sanguinis (strain SK36).